Here is a 512-residue protein sequence, read N- to C-terminus: Rab11 family-interacting protein 2 (512 aa).

The C2 domain occupies 1–120 (MMLSEQAQKW…DKQRRKTEWF (120 aa)). The interval 15–102 (VQVTVLQAKD…GLDKFLGQVA (88 aa)) is necessary for its cellular translocation to the plasma membrane. Disordered regions lie at residues 174 to 231 (RKSD…MSDL) and 263 to 287 (PESG…NQPG). 2 stretches are compositionally biased toward polar residues: residues 221–231 (RLSSAHSMSDL) and 277–287 (SFDTSKLNQPG). Position 227 is a phosphoserine; by MARK2 (serine 227). Phosphoserine is present on serine 277. An NPF 1 motif is present at residues 323 to 325 (NPF). Positions 347 to 374 (KESKREKREKVSLFERVTGKRDSRRPDK) are enriched in basic and acidic residues. The interval 347 to 390 (KESKREKREKVSLFERVTGKRDSRRPDKLNNGGSDSPCDLKSPS) is disordered. Short sequence motifs (NPF) lie at residues 406–408 (NPF) and 440–442 (NPF). Residues 437–499 (PDNNPFDATA…EETPSILRVP (63 aa)) form the FIP-RBD domain. Positions 465 to 512 (ELLRRKDTHIRELEDYIDNLLVRVMEETPSILRVPYEPSRKAGKFTNS) are necessary for interaction with AP2A1, RAB11A, subcellular location, endocytosis activity and homooligomerization.

In terms of assembly, homooligomerizes in a Rab11-independent manner. Forms a heterooligomeric complex with RAB11FIP4. Interacts with AP2A1, MYO5B, RAB25 and REPS1. Interacts with RAB11A and RAB11B (activated GTP-bound form). Interacts with NPC1L1. Interacts (via NPF motifs) with EHD1 and EHD3. Interacts with TICAM2; this interaction directs RAB11FIP2 to the phagosome. Interacts with RAB14 and RAB25 (GTP-bound forms). Phosphorylation at Ser-227 by MARK2 regulates epithelial cell polarity.

It localises to the cell membrane. The protein localises to the recycling endosome membrane. In terms of biological role, a Rab11 effector binding preferentially phosphatidylinositol 3,4,5-trisphosphate (PtdInsP3) and phosphatidic acid (PA) and acting in the regulation of the transport of vesicles from the endosomal recycling compartment (ERC) to the plasma membrane. Involved in insulin granule exocytosis. Also involved in receptor-mediated endocytosis and membrane trafficking of recycling endosomes, probably originating from clathrin-coated vesicles. Required in a complex with MYO5B and RAB11 for the transport of NPC1L1 to the plasma membrane. Also acts as a regulator of cell polarity. Plays an essential role in phagocytosis through a mechanism involving TICAM2, RAC1 and CDC42 Rho GTPases for controlling actin-dynamics. This Mus musculus (Mouse) protein is Rab11 family-interacting protein 2 (Rab11fip2).